The sequence spans 309 residues: tRNA dimethylallyltransferase (309 aa).

Residue 9-16 participates in ATP binding; that stretch reads GPTAVGKT. A substrate-binding site is contributed by 11–16; that stretch reads TAVGKT. The segment at 34-37 is interaction with substrate tRNA; that stretch reads DSMQ.

The protein belongs to the IPP transferase family. In terms of assembly, monomer. Requires Mg(2+) as cofactor.

It catalyses the reaction adenosine(37) in tRNA + dimethylallyl diphosphate = N(6)-dimethylallyladenosine(37) in tRNA + diphosphate. Functionally, catalyzes the transfer of a dimethylallyl group onto the adenine at position 37 in tRNAs that read codons beginning with uridine, leading to the formation of N6-(dimethylallyl)adenosine (i(6)A). This is tRNA dimethylallyltransferase from Enterococcus faecalis (strain ATCC 700802 / V583).